Consider the following 90-residue polypeptide: UPF0235 protein CPn_0497/CP_0257/CPj0497/CpB0517 (90 aa).

It belongs to the UPF0235 family.

This Chlamydia pneumoniae (Chlamydophila pneumoniae) protein is UPF0235 protein CPn_0497/CP_0257/CPj0497/CpB0517.